Consider the following 210-residue polypeptide: Imidazoleglycerol-phosphate dehydratase (210 aa).

Belongs to the imidazoleglycerol-phosphate dehydratase family.

Its subcellular location is the cytoplasm. It catalyses the reaction D-erythro-1-(imidazol-4-yl)glycerol 3-phosphate = 3-(imidazol-4-yl)-2-oxopropyl phosphate + H2O. The protein operates within amino-acid biosynthesis; L-histidine biosynthesis; L-histidine from 5-phospho-alpha-D-ribose 1-diphosphate: step 6/9. This is Imidazoleglycerol-phosphate dehydratase from Mycobacterium leprae (strain Br4923).